The chain runs to 221 residues: Uracil-DNA glycosylase (221 aa).

The active-site Proton acceptor is the aspartate 64.

It belongs to the uracil-DNA glycosylase (UDG) superfamily. UNG family.

The protein resides in the cytoplasm. The enzyme catalyses Hydrolyzes single-stranded DNA or mismatched double-stranded DNA and polynucleotides, releasing free uracil.. In terms of biological role, excises uracil residues from the DNA which can arise as a result of misincorporation of dUMP residues by DNA polymerase or due to deamination of cytosine. This is Uracil-DNA glycosylase from Mycoplasmopsis pulmonis (strain UAB CTIP) (Mycoplasma pulmonis).